The sequence spans 406 residues: Synaptic vesicle membrane protein VAT-1 homolog (406 aa).

The disordered stretch occupies residues 1–57 (MSAEREAAEAATVAAATEAGAETGTGAGEGAPSQPPTVEVASDPQPPPAPEASASAS). Residue Ser2 is modified to N-acetylserine. Residue Ser2 is modified to Phosphoserine. The span at 9-22 (EAATVAAATEAGAE) shows a compositional bias: low complexity. A phosphoserine mark is found at Ser33 and Ser42.

This sequence belongs to the zinc-containing alcohol dehydrogenase family. Quinone oxidoreductase subfamily.

It localises to the cytoplasm. The protein localises to the mitochondrion outer membrane. Plays a part in calcium-regulated keratinocyte activation in epidermal repair mechanisms. Has no effect on cell proliferation. Possesses ATPase activity. Negatively regulates mitochondrial fusion in cooperation with mitofusin proteins (MFN1-2). This is Synaptic vesicle membrane protein VAT-1 homolog (Vat1) from Mus musculus (Mouse).